Here is a 240-residue protein sequence, read N- to C-terminus: MRIIPAIDIIEGKCVRLSKGDYDTKIIYNENPLEVAKSFEAYGIEYLHLVDLDGAKSSKIVNYKILEQIATQTSLKIDFGGGLKSDDDLRIAFESGANQITGGSIAVKNRTIFEKWISEYGSEKIILGADAKDEKIAVSGWLEESNEDLVPFIQDYQNKGIQYVICTDIAKDGMLQGPSFDLYSKILAEAKGVKLIASGGISTFDELPKLAELGCEGTIIGKAIYEGRITLKQLENYIIG.

D8 (proton acceptor) is an active-site residue. The active-site Proton donor is D130.

The protein belongs to the HisA/HisF family.

It is found in the cytoplasm. It catalyses the reaction 1-(5-phospho-beta-D-ribosyl)-5-[(5-phospho-beta-D-ribosylamino)methylideneamino]imidazole-4-carboxamide = 5-[(5-phospho-1-deoxy-D-ribulos-1-ylimino)methylamino]-1-(5-phospho-beta-D-ribosyl)imidazole-4-carboxamide. It participates in amino-acid biosynthesis; L-histidine biosynthesis; L-histidine from 5-phospho-alpha-D-ribose 1-diphosphate: step 4/9. The sequence is that of 1-(5-phosphoribosyl)-5-[(5-phosphoribosylamino)methylideneamino] imidazole-4-carboxamide isomerase from Flavobacterium johnsoniae (strain ATCC 17061 / DSM 2064 / JCM 8514 / BCRC 14874 / CCUG 350202 / NBRC 14942 / NCIMB 11054 / UW101) (Cytophaga johnsonae).